A 2812-amino-acid chain; its full sequence is Polyunsaturated fatty acid synthase subunit A (2812 aa).

The Ketosynthase family 3 (KS3) domain maps to 12–472 (DTRIAVIGMS…GANYHAVLEE (461 aa)). Catalysis depends on for beta-ketoacyl synthase activity residues C213, H348, and H390. One can recognise a Malonyl-CoA:ACP transacylase (MAT) domain in the interval 602-913 (LFSGQGAQYT…TVSVNPASGK (312 aa)). The stretch at 1000 to 1048 (DEEAKREAARLQKQLEDAQRQLDEAKRAADEANQKLAAAKEEAKSAAAS) forms a coiled coil. 3 Carrier domains span residues 1114–1193 (ALLA…KAEI), 1232–1308 (ERAE…KAEI), and 1342–1418 (AKAE…KAEI). S1152, S1267, and S1377 each carry O-(pantetheine 4'-phosphoryl)serine. The interval 1422-1442 (SAPAPAAAAPAPAAPAPAAAA) is disordered. The segment covering 1423–1442 (APAPAAAAPAPAAPAPAAAA) has biased composition (low complexity). The Carrier 4 domain occupies 1455–1531 (AKAETVVMEV…EVVDAMKAEI (77 aa)). The residue at position 1490 (S1490) is an O-(pantetheine 4'-phosphoryl)serine. The tract at residues 1535–1555 (SAPAPAAAAPAPAAPAPAAAA) is disordered. Low complexity predominate over residues 1536–1555 (APAPAAAAPAPAAPAPAAAA). Carrier domains are found at residues 1568–1644 (AKAE…KAEI), 1681–1757 (AKAE…KAEI), 1792–1868 (AKAE…KAEI), and 1903–1979 (AKAE…KAEI). S1603, S1716, S1827, and S1938 each carry O-(pantetheine 4'-phosphoryl)serine. A Ketoreductase (KR) domain is found at 2257–2484 (VVSGGARGIT…VKSICFGPWD (228 aa)). Residues 2524–2651 (EILVGNWRTP…RAVVVLSSQG (128 aa)) are N-terminal hotdog fold. A PKS/mFAS DH domain is found at 2524 to 2812 (EILVGNWRTP…SVIATDSLAF (289 aa)). The tract at residues 2540 to 2800 (ETITLHRKIS…NEQGDLFIDV (261 aa)) is dehydratase (DH) domain. H2559 serves as the catalytic Proton acceptor; for dehydratase activity. A C-terminal hotdog fold region spans residues 2666-2812 (ADPAAQSAVY…SVIATDSLAF (147 aa)). Residue D2730 is the Proton donor; for dehydratase activity of the active site.

Component of the polyunsaturated fatty acid synthase complex composed of at least ORF-A, ORF-B and ORF-C. It depends on pantetheine 4'-phosphate as a cofactor.

It participates in lipid metabolism; fatty acid biosynthesis. In terms of biological role, poliketide synthase-like protein; part of the polyunsaturated fatty acid synthase composed of the 3 PKS-like subunits A, B and C. While the saturated fatty acids (SFAs) in Thraustochytrium are produced by the conventional fatty acid synthase (FAS) pathway, polyunsaturated fatty acids (PUFAs) including docosahexeanoic acid (DHA) and docosapentaenoic acid (DPA) are synthesized via an anaerobical PKS pathway. PUFA synthase assimilates fatty acyl-CoA, the product of FAS, as the starter unit to synthesize DPA, and this starter unit may be butyryl-CoA, hexanoyl-CoA, or octanoyl-CoA. DPA and DHA biosynthesis seem to differ by the reduction at the N-3 position by PUFA synthase, not the extension of carbon chain. In DHA biosynthesis, PUFA synthase extends the fatty acyl chain from the methyl toward the carboxyl end, and the double bond is formed when the carbon chain is growing, instead of afterward. Therefore, PUFA synthase is unable to transform DPA to DHA, suggesting that DPA is not the precursor of DHA. Moreover, DPA molecule is partly extended by FAS KS domain, so DPA biosynthesis is less dependent on PUFA synthase KS domain than DHA. The sequence is that of Polyunsaturated fatty acid synthase subunit A from Thraustochytrium sp. (strain ATCC 26185 / S-3).